Here is a 447-residue protein sequence, read N- to C-terminus: Probable alpha-galactosidase B (447 aa).

Residues 1–22 form the signal peptide; it reads MTTFLSLTTAAAVLTLARGSNA. Disulfide bonds link Cys-45–Cys-77 and Cys-127–Cys-157. Asp-155 acts as the Nucleophile in catalysis. 2 N-linked (GlcNAc...) asparagine glycosylation sites follow: Asn-162 and Asn-180. 225–229 serves as a coordination point for substrate; the sequence is NWGQA. Asn-236 carries an N-linked (GlcNAc...) asparagine glycan. Asp-247 (proton donor) is an active-site residue. Asn-286 carries an N-linked (GlcNAc...) asparagine glycan.

It belongs to the glycosyl hydrolase 27 family.

The protein localises to the secreted. It catalyses the reaction Hydrolysis of terminal, non-reducing alpha-D-galactose residues in alpha-D-galactosides, including galactose oligosaccharides, galactomannans and galactolipids.. Its function is as follows. Hydrolyzes a variety of simple alpha-D-galactoside as well as more complex molecules such as oligosaccharides and polysaccharides. This chain is Probable alpha-galactosidase B (aglB), found in Neosartorya fischeri (strain ATCC 1020 / DSM 3700 / CBS 544.65 / FGSC A1164 / JCM 1740 / NRRL 181 / WB 181) (Aspergillus fischerianus).